The chain runs to 124 residues: Glycine cleavage system H protein (124 aa).

The 83-residue stretch at 19–101 (VATVGITNHA…EGEGWLFKME (83 aa)) folds into the Lipoyl-binding domain. Lys-60 bears the N6-lipoyllysine mark.

This sequence belongs to the GcvH family. The glycine cleavage system is composed of four proteins: P, T, L and H. It depends on (R)-lipoate as a cofactor.

Its function is as follows. The glycine cleavage system catalyzes the degradation of glycine. The H protein shuttles the methylamine group of glycine from the P protein to the T protein. The chain is Glycine cleavage system H protein from Thermotoga maritima (strain ATCC 43589 / DSM 3109 / JCM 10099 / NBRC 100826 / MSB8).